Reading from the N-terminus, the 679-residue chain is Pollen receptor-like kinase 4 (679 aa).

Residues 1–39 form the signal peptide; that stretch reads MLTWETPVMLASNTASTKKLAFITTFLIIVLCPVTMVMS. LRR repeat units follow at residues 118–141, 142–165, 167–191, 193–217, and 234–257; these read IKNL…VKNF, GALK…AFDG, HHLK…AYLP, LLEL…DLKL, and SNMD…PCSS. The segment covering 252–269 has biased composition (low complexity); sequence LSPCSSDSGSSPDLPSSP. Residues 252 to 271 form a disordered region; that stretch reads LSPCSSDSGSSPDLPSSPTE. The helical transmembrane segment at 278-298 threads the bilayer; sequence FFIIAIVLIVIGIILMIISLV. The disordered stretch occupies residues 311 to 344; sequence SAYPSAGQDRTEKYNYDQSTDKDKAADSVTSYTS. The span at 319–336 shows a compositional bias: basic and acidic residues; the sequence is DRTEKYNYDQSTDKDKAA. The 275-residue stretch at 372 to 646 folds into the Protein kinase domain; it reads RASAEVLGSG…RDAVEKIERL (275 aa). The residue at position 374 (Ser-374) is a Phosphoserine. ATP is bound by residues 378 to 386 and Lys-400; that span reads LGSGSFGSS. A phosphoserine mark is found at Ser-452 and Ser-455. A Phosphothreonine modification is found at Thr-472. Tyr-542 bears the Phosphotyrosine mark.

This sequence belongs to the protein kinase superfamily. Ser/Thr protein kinase family. In terms of assembly, interacts in vitro with ROPGEF1 (via PRONE domain). Interacts weakly with the GRI peptide. As to expression, expressed in pollen and/or in flowers, but not in leaves.

Its subcellular location is the membrane. It carries out the reaction L-seryl-[protein] + ATP = O-phospho-L-seryl-[protein] + ADP + H(+). The enzyme catalyses L-threonyl-[protein] + ATP = O-phospho-L-threonyl-[protein] + ADP + H(+). Functionally, receptor-like kinase involved in the control of pollen germination and pollen tube polar growth. Can phosphorylate ROPGEF1 in vitro. In Arabidopsis thaliana (Mouse-ear cress), this protein is Pollen receptor-like kinase 4.